We begin with the raw amino-acid sequence, 374 residues long: UPF0754 membrane protein SA1664 (374 aa).

2 consecutive transmembrane segments (helical) span residues 4 to 24 (LFII…TNVI) and 354 to 374 (SLGF…AIFV).

Belongs to the UPF0754 family.

The protein resides in the cell membrane. The chain is UPF0754 membrane protein SA1664 from Staphylococcus aureus (strain N315).